The primary structure comprises 1370 residues: Putative Polycomb group protein ASXL2 (1370 aa).

Positions 11 to 86 (RTWAEAAKTV…RMGVYTLKKD (76 aa)) constitute an HTH HARE-type domain. The tract at residues 92–216 (KELSECSEES…DSVPAKPGQM (125 aa)) is disordered. Positions 103–120 (DGQSDSHSSDNSSSSDGG) are enriched in low complexity. A compositionally biased stretch (pro residues) spans 141 to 152 (PPSPPSGCPSPT). Ser-150 is modified (phosphoserine). Positions 178–182 (QQKKK) match the Nuclear localization signal motif. Over residues 186–198 (CRPSMSISNQHLS) the composition is skewed to polar residues. In terms of domain architecture, DEUBAD spans 229-338 (PDSILVNTNL…FENYYGQSSG (110 aa)). The LXXLL motif motif lies at 258-262 (LLLLL). Disordered regions lie at residues 340 to 487 (SLED…AGLQ) and 516 to 535 (QESL…SSWE). Positions 398–412 (QKEENQDEARPDSKS) are enriched in basic and acidic residues. Phosphoserine occurs at positions 477, 524, 553, and 590. Arg-594 carries the asymmetric dimethylarginine modification. Position 601 is a phosphoserine (Ser-601). Residues 643 to 652 (IPGPGPGGGQ) are compositionally biased toward gly residues. Disordered regions lie at residues 643-734 (IPGP…LASS), 805-891 (PKAG…SSIP), and 1103-1175 (GHAD…VSEQ). 2 stretches are compositionally biased toward polar residues: residues 719–734 (AQLQ…LASS) and 830–839 (MTSSPVTTAS). Positions 849–870 (SGTATSTGSAPSSSTLPAASSL) are enriched in low complexity. The span at 871-891 (KTPGTSANMNGPISRTSSSIP) shows a compositional bias: polar residues. Residues 1119–1131 (DESDEDRVGDEQE) are compositionally biased toward acidic residues. Phosphoserine occurs at positions 1121 and 1254. Residues 1332 to 1369 (PSKCYCRLKAMIMCKGCGAFCHDDCIGPSKLCVSCLVV) form a PHD-type; atypical zinc finger.

This sequence belongs to the Asx family. In terms of assembly, core component of the polycomb repressive deubiquitinase (PR-DUB) complex, at least composed of BAP1, one of ASXL1, ASXL2 or (probably) ASXL3, and one of MBD5 or MBD6. Distinct combinations of ASXL and MBD proteins may preferentially bind specific histone modification marks. The PR-DUB core associates with a number of accessory proteins, including FOXK1, FOXK2, KDM1B, HCFC1 and OGT; KDM1B specifically associates with ASXL2 PR-DUB complexes. Interacts (via PHD domain) with MBD5 and MBD6 (via MBD domain); the interaction is probably direct and mediates association of MBD proteins with the PR-DUB core. Interacts with PPARA and PPARG.

It is found in the nucleus. Putative Polycomb group (PcG) protein. PcG proteins act by forming multiprotein complexes, which are required to maintain the transcriptionally repressive state of homeotic genes throughout development. PcG proteins are not required to initiate repression, but to maintain it during later stages of development. They probably act via methylation of histones, rendering chromatin heritably changed in its expressibility. Involved in transcriptional regulation mediated by ligand-bound nuclear hormone receptors, such as peroxisome proliferator-activated receptor gamma (PPARG). Acts as a coactivator for PPARG and enhances its adipocyte differentiation-inducing activity; the function seems to involve differential recruitment of acetylated and methylated histone H3. Non-catalytic component of the PR-DUB complex, a complex that specifically mediates deubiquitination of histone H2A monoubiquitinated at 'Lys-119' (H2AK119ub1). The PR-DUB complex is an epigenetic regulator of gene expression and acts as a transcriptional coactivator, affecting genes involved in development, cell communication, signaling, cell proliferation and cell viability. ASXL1, ASXL2 and ASXL3 function redundantly in the PR-DUB complex. The ASXL proteins are essential for chromatin recruitment and transcriptional activation of associated genes. ASXL1 and ASXL2 are important for BAP1 protein stability. The polypeptide is Putative Polycomb group protein ASXL2 (Asxl2) (Mus musculus (Mouse)).